The sequence spans 495 residues: Aspartyl/glutamyl-tRNA(Asn/Gln) amidotransferase subunit B (495 aa).

Belongs to the GatB/GatE family. GatB subfamily. Heterotrimer of A, B and C subunits.

It catalyses the reaction L-glutamyl-tRNA(Gln) + L-glutamine + ATP + H2O = L-glutaminyl-tRNA(Gln) + L-glutamate + ADP + phosphate + H(+). The enzyme catalyses L-aspartyl-tRNA(Asn) + L-glutamine + ATP + H2O = L-asparaginyl-tRNA(Asn) + L-glutamate + ADP + phosphate + 2 H(+). In terms of biological role, allows the formation of correctly charged Asn-tRNA(Asn) or Gln-tRNA(Gln) through the transamidation of misacylated Asp-tRNA(Asn) or Glu-tRNA(Gln) in organisms which lack either or both of asparaginyl-tRNA or glutaminyl-tRNA synthetases. The reaction takes place in the presence of glutamine and ATP through an activated phospho-Asp-tRNA(Asn) or phospho-Glu-tRNA(Gln). The chain is Aspartyl/glutamyl-tRNA(Asn/Gln) amidotransferase subunit B from Methanosarcina mazei (strain ATCC BAA-159 / DSM 3647 / Goe1 / Go1 / JCM 11833 / OCM 88) (Methanosarcina frisia).